A 953-amino-acid chain; its full sequence is Nonsense-mediated mRNA decay factor SMG8 (953 aa).

Disordered stretches follow at residues 571-604 and 629-653; these read AQDA…CSQP and PCFD…ESNN. Residues 574–586 are compositionally biased toward acidic residues; it reads AELDPDEEDEELP. Polar residues predominate over residues 595–604; sequence ITQSNGCSQP. Positions 634–653 are enriched in low complexity; sequence SSSSEAESTCSGTSSEESNN.

Belongs to the SMG8 family.

Its function is as follows. Involved in nonsense-mediated decay (NMD) of mRNAs containing premature stop codons. Probable component of kinase complex containing nonC and recruited to stalled ribosomes. In Drosophila persimilis (Fruit fly), this protein is Nonsense-mediated mRNA decay factor SMG8.